Reading from the N-terminus, the 229-residue chain is Large ribosomal subunit protein uL1 (229 aa).

Belongs to the universal ribosomal protein uL1 family. In terms of assembly, part of the 50S ribosomal subunit.

Its function is as follows. Binds directly to 23S rRNA. The L1 stalk is quite mobile in the ribosome, and is involved in E site tRNA release. In terms of biological role, protein L1 is also a translational repressor protein, it controls the translation of the L11 operon by binding to its mRNA. The protein is Large ribosomal subunit protein uL1 of Streptococcus uberis (strain ATCC BAA-854 / 0140J).